Here is a 194-residue protein sequence, read N- to C-terminus: Peptidyl-tRNA hydrolase (194 aa).

Tyr16 lines the tRNA pocket. The Proton acceptor role is filled by His21. Phe67, Asn69, and Asn115 together coordinate tRNA.

It belongs to the PTH family. Monomer.

It localises to the cytoplasm. It catalyses the reaction an N-acyl-L-alpha-aminoacyl-tRNA + H2O = an N-acyl-L-amino acid + a tRNA + H(+). Its function is as follows. Hydrolyzes ribosome-free peptidyl-tRNAs (with 1 or more amino acids incorporated), which drop off the ribosome during protein synthesis, or as a result of ribosome stalling. In terms of biological role, catalyzes the release of premature peptidyl moieties from peptidyl-tRNA molecules trapped in stalled 50S ribosomal subunits, and thus maintains levels of free tRNAs and 50S ribosomes. The sequence is that of Peptidyl-tRNA hydrolase from Salmonella paratyphi B (strain ATCC BAA-1250 / SPB7).